Reading from the N-terminus, the 235-residue chain is Attacin-E (235 aa).

Residues 1-19 (MFGKIVFLLLVALCAGVQS) form the signal peptide. The propeptide occupies 20–47 (RYLIVSEPVYYIEHYEEPELLASSRVRR).

It belongs to the attacin/sarcotoxin-2 family. Attacin F appears to be derived by proteolytic digestion of attacin E.

The protein localises to the secreted. Functionally, hemolymph antibacterial protein. This chain is Attacin-E, found in Hyalophora cecropia (Cecropia moth).